Here is a 454-residue protein sequence, read N- to C-terminus: Glutamine synthetase (454 aa).

Residues 19–111 enclose the GS beta-grasp domain; the sequence is NNVKFIRFQF…VICDVYKDEK (93 aa). Residues 118–454 form the GS catalytic domain; it reads PRSRLKAILE…DWETGKYLIY (337 aa). E142 and E144 together coordinate Mg(2+). ATP is bound at residue E194. Mg(2+) is bound by residues E199 and E206. L-glutamate is bound by residues 250–251 and G251; that span reads NG. H255 lines the Mg(2+) pocket. ATP is bound by residues 257 to 259 and S259; that span reads HQS. R309, E315, and R327 together coordinate L-glutamate. R327, R332, and K339 together coordinate ATP. A Mg(2+)-binding site is contributed by E344. Residue R346 participates in L-glutamate binding.

It belongs to the glutamine synthetase family. As to quaternary structure, oligomer of 12 subunits arranged in the form of two hexagons. Requires Mg(2+) as cofactor.

The protein localises to the cytoplasm. The enzyme catalyses L-glutamate + NH4(+) + ATP = L-glutamine + ADP + phosphate + H(+). Feedback inhibited by glycine and alanine, and inhibited by low concentrations of methionine sulfoximine. Functionally, probably involved in nitrogen metabolism via ammonium assimilation. Catalyzes the ATP-dependent biosynthesis of glutamine from glutamate and ammonia. Beta-glutamate is a much poorer substrate than alpha-glutamate. The polypeptide is Glutamine synthetase (Methanocaldococcus jannaschii (strain ATCC 43067 / DSM 2661 / JAL-1 / JCM 10045 / NBRC 100440) (Methanococcus jannaschii)).